A 744-amino-acid chain; its full sequence is MRYSNVIDFSICMSIKSENTFLLENPKFIKNLKFFNIHSSQEPKSPTDIRNSVENSDFNVQLENKLKNSFKQDGKQKSKKKKILSVDLDQEHIFKKKNKSKVIISAPDDLTNNSEGSFKSGKQKKKEKGKHKQNVNKDIHHTKNNRLSNLDPLDDINKDKSVIIDSSLSIEELSIKLKIPPAEIITGLFLKGISVTVNQIIDIAIATQVAQKYNFTVINQNQNNQSELDQSDKLQQVSTITSINRAPIVTILGHVDHGKTTLLDAIRNTNAAGKEIGGITQSIKAYEVNWPYNSSNQKLIFIDTPGHEAFSSMRLRCAQITDIVILIIAADDGLKPQTIEAINYISSKKTPFIVAINKIDKANLNLIRVREELATYNIISTDWGGEIQFIEISALQKRNISQLLTAICSLAEFINLKADPTELVQGSILEAYLDKTKGIVVNIIVLSGTLHIGDIIVSGHSYGRVKKIINSLGNELIQAGPSSILEVLGFYSIPQTGRYFQVVNSEKEAKKMIAQIPLSGITQTTKNILNLNPKVYNHNLNTRSLNLIIKADTQGTIDAIINSFIQISQKKIKLNILTASLGVVSNTDLDLAFSTQALIIAFNINISTNILNAAEKLNLSLRKFVLIYDLVDYVTYSMLDLVDPEYDKILIGQAEVQTTFTINKGTVAGCIVKSGKLKKDALIGVYRKNKLIYEGVINSLKRMKNDVNEVVIGNECGILSKDYHFWQSEDLIKAYELHEKAKTL.

Residues 113–146 (NSEGSFKSGKQKKKEKGKHKQNVNKDIHHTKNNR) are disordered. The span at 121–134 (GKQKKKEKGKHKQN) shows a compositional bias: basic residues. In terms of domain architecture, tr-type G spans 244 to 417 (NRAPIVTILG…CSLAEFINLK (174 aa)). The tract at residues 253 to 260 (GHVDHGKT) is G1. 253–260 (GHVDHGKT) is a GTP binding site. Residues 278-282 (GITQS) are G2. The G3 stretch occupies residues 303 to 306 (DTPG). GTP contacts are provided by residues 303–307 (DTPGH) and 357–360 (NKID). Positions 357-360 (NKID) are G4. Residues 393–395 (SAL) form a G5 region.

Belongs to the TRAFAC class translation factor GTPase superfamily. Classic translation factor GTPase family. IF-2 subfamily.

It is found in the plastid. Its subcellular location is the chloroplast. Functionally, one of the essential components for the initiation of protein synthesis. Protects formylmethionyl-tRNA from spontaneous hydrolysis and promotes its binding to the 30S ribosomal subunits. Also involved in the hydrolysis of GTP during the formation of the 70S ribosomal complex. In Gracilaria tenuistipitata var. liui (Red alga), this protein is Translation initiation factor IF-2, chloroplastic (infB).